We begin with the raw amino-acid sequence, 286 residues long: uncharacterized protein (286 aa).

A signal peptide (tat-type signal) is located at residues 1–31 (MKKMSRRQFLKGMFGALAAGALTAGGGYGYA). Residues D65, H67, D97, N130, H221, and H223 each contribute to the a divalent metal cation site.

The protein belongs to the metallophosphoesterase superfamily. A divalent metal cation serves as cofactor. Predicted to be exported by the Tat system. The position of the signal peptide cleavage has not been experimentally proven.

This is an uncharacterized protein from Bacillus subtilis (strain 168).